A 493-amino-acid polypeptide reads, in one-letter code: Probable mannosyl-oligosaccharide alpha-1,2-mannosidase 1B (493 aa).

An N-terminal signal peptide occupies residues 1-18 (MHLPSLSVALALVSSSLA). N87 and N174 each carry an N-linked (GlcNAc...) asparagine glycan. An intrachain disulfide couples C324 to C353. Catalysis depends on E367, which acts as the Proton donor. The N-linked (GlcNAc...) asparagine glycan is linked to N489.

This sequence belongs to the glycosyl hydrolase 47 family. As to quaternary structure, monomer. Ca(2+) is required as a cofactor. It depends on Mg(2+) as a cofactor.

It is found in the cytoplasmic vesicle lumen. The catalysed reaction is N(4)-(alpha-D-Man-(1-&gt;2)-alpha-D-Man-(1-&gt;2)-alpha-D-Man-(1-&gt;3)-[alpha-D-Man-(1-&gt;2)-alpha-D-Man-(1-&gt;3)-[alpha-D-Man-(1-&gt;2)-alpha-D-Man-(1-&gt;6)]-alpha-D-Man-(1-&gt;6)]-beta-D-Man-(1-&gt;4)-beta-D-GlcNAc-(1-&gt;4)-beta-D-GlcNAc)-L-asparaginyl-[protein] (N-glucan mannose isomer 9A1,2,3B1,2,3) + 4 H2O = N(4)-(alpha-D-Man-(1-&gt;3)-[alpha-D-Man-(1-&gt;3)-[alpha-D-Man-(1-&gt;6)]-alpha-D-Man-(1-&gt;6)]-beta-D-Man-(1-&gt;4)-beta-D-GlcNAc-(1-&gt;4)-beta-D-GlcNAc)-L-asparaginyl-[protein] (N-glucan mannose isomer 5A1,2) + 4 beta-D-mannose. It catalyses the reaction N(4)-(alpha-D-Man-(1-&gt;2)-alpha-D-Man-(1-&gt;2)-alpha-D-Man-(1-&gt;3)-[alpha-D-Man-(1-&gt;3)-[alpha-D-Man-(1-&gt;2)-alpha-D-Man-(1-&gt;6)]-alpha-D-Man-(1-&gt;6)]-beta-D-Man-(1-&gt;4)-beta-D-GlcNAc-(1-&gt;4)-beta-D-GlcNAc)-L-asparaginyl-[protein] (N-glucan mannose isomer 8A1,2,3B1,3) + 3 H2O = N(4)-(alpha-D-Man-(1-&gt;3)-[alpha-D-Man-(1-&gt;3)-[alpha-D-Man-(1-&gt;6)]-alpha-D-Man-(1-&gt;6)]-beta-D-Man-(1-&gt;4)-beta-D-GlcNAc-(1-&gt;4)-beta-D-GlcNAc)-L-asparaginyl-[protein] (N-glucan mannose isomer 5A1,2) + 3 beta-D-mannose. The protein operates within protein modification; protein glycosylation. Its function is as follows. Involved in the maturation of Asn-linked oligosaccharides. Progressively trims alpha-1,2-linked mannose residues from Man(9)GlcNAc(2) to produce Man(5)GlcNAc(2). In Neosartorya fischeri (strain ATCC 1020 / DSM 3700 / CBS 544.65 / FGSC A1164 / JCM 1740 / NRRL 181 / WB 181) (Aspergillus fischerianus), this protein is Probable mannosyl-oligosaccharide alpha-1,2-mannosidase 1B (mns1B).